The primary structure comprises 347 residues: Anthranilate phosphoribosyltransferase (347 aa).

Residues Gly-88, 91-92 (GD), Thr-96, 98-101 (NIST), 116-124 (KHGNRAASS), and Ser-128 each bind 5-phospho-alpha-D-ribose 1-diphosphate. Anthranilate is bound at residue Gly-88. Ser-100 contributes to the Mg(2+) binding site. Residue Asn-119 coordinates anthranilate. Position 174 (Arg-174) interacts with anthranilate. Asp-233 and Glu-234 together coordinate Mg(2+).

It belongs to the anthranilate phosphoribosyltransferase family. In terms of assembly, homodimer. Mg(2+) is required as a cofactor.

It carries out the reaction N-(5-phospho-beta-D-ribosyl)anthranilate + diphosphate = 5-phospho-alpha-D-ribose 1-diphosphate + anthranilate. Its pathway is amino-acid biosynthesis; L-tryptophan biosynthesis; L-tryptophan from chorismate: step 2/5. Catalyzes the transfer of the phosphoribosyl group of 5-phosphorylribose-1-pyrophosphate (PRPP) to anthranilate to yield N-(5'-phosphoribosyl)-anthranilate (PRA). This is Anthranilate phosphoribosyltransferase from Rhodospirillum rubrum (strain ATCC 11170 / ATH 1.1.1 / DSM 467 / LMG 4362 / NCIMB 8255 / S1).